Reading from the N-terminus, the 230-residue chain is 5'-methylthioadenosine/S-adenosylhomocysteine nucleosidase (230 aa).

The active-site Proton acceptor is Glu-12. Substrate contacts are provided by residues Gly-78, Val-152, and Met-173–Glu-174. The active-site Proton donor is Asp-197.

It belongs to the PNP/UDP phosphorylase family. MtnN subfamily.

The catalysed reaction is S-adenosyl-L-homocysteine + H2O = S-(5-deoxy-D-ribos-5-yl)-L-homocysteine + adenine. It catalyses the reaction S-methyl-5'-thioadenosine + H2O = 5-(methylsulfanyl)-D-ribose + adenine. The enzyme catalyses 5'-deoxyadenosine + H2O = 5-deoxy-D-ribose + adenine. Its pathway is amino-acid biosynthesis; L-methionine biosynthesis via salvage pathway; S-methyl-5-thio-alpha-D-ribose 1-phosphate from S-methyl-5'-thioadenosine (hydrolase route): step 1/2. Its function is as follows. Catalyzes the irreversible cleavage of the glycosidic bond in both 5'-methylthioadenosine (MTA) and S-adenosylhomocysteine (SAH/AdoHcy) to adenine and the corresponding thioribose, 5'-methylthioribose and S-ribosylhomocysteine, respectively. Also cleaves 5'-deoxyadenosine, a toxic by-product of radical S-adenosylmethionine (SAM) enzymes, into 5-deoxyribose and adenine. The protein is 5'-methylthioadenosine/S-adenosylhomocysteine nucleosidase of Glaesserella parasuis serovar 5 (strain SH0165) (Haemophilus parasuis).